Consider the following 979-residue polypeptide: MPAELLLLLIVAFANPSCQVLSSLRMAAILDDQTVCGRGERLALALAREQINGIIEVPAKARVEVDIFELQRDSQYETTDTMCQILPKGVVSVLGPSSSPASASTVSHICGEKEIPHIKVGPEETPRLQYLRFASVSLYPSNEDVSLAVSRILKSFNYPSASLICAKAECLLRLEELVRGFLISKETLSVRMLDDSRDPTPLLKEIRDDKVSTIIIDANASISHLVLRKASELGMTSAFYKYILTTMDFPILHLDGIVEDSSNILGFSMFNTSHPFYPEFVRSLNMSWRENCEASTYPGPALSAALMFDAVHVVVSAVRELNRSQEIGVKPLACTSANIWPHGTSLMNYLRMVEYDGLTGRVEFNSKGQRTNYTLRILEKSRQGHREIGVWYSNRTLAMNATTLDINLSQTLANKTLVVTTILENPYVMRRPNFQALSGNERFEGFCVDMLRELAELLRFRYRLRLVEDGLYGAPEPNGSWTGMVGELINRKADLAVAAFTITAEREKVIDFSKPFMTLGISILYRVHMGRKPGYFSFLDPFSPAVWLFMLLAYLAVSCVLFLAARLSPYEWYNPHPCLRARPHILENQYTLGNSLWFPVGGFMQQGSEIMPRALSTRCVSGVWWAFTLIIISSYTANLAAFLTVQRMEVPVESADDLADQTNIEYGTIHAGSTMTFFQNSRYQTYQRMWNYMQSKQPSVFVKSTEEGIARVLNSRYAFLLESTMNEYHRRLNCNLTQIGGLLDTKGYGIGMPLGSPFRDEITLAILQLQENNRLEILKRKWWEGGRCPKEEDHRAKGLGMENIGGIFVVLICGLIIAVFVAVMEFIWSTRRSAESEEVSVCQEMLQELRHAVSCRKTSRSRRRRRPGGPSRALLSLRAVREMRLSNGKLYSAGAGGDAGAHGGPQRLLDDPGPPGGPRPQAPTPCTHVRVCQECRRIQALRASGAGAPPRGLGTPAEATSPPRPRPGPTGPRELTEHE.

Positions 1–14 (MPAELLLLLIVAFA) are cleaved as a signal peptide. Topologically, residues 15–544 (NPSCQVLSSL…YFSFLDPFSP (530 aa)) are extracellular. Disulfide bonds link Cys-36-Cys-292, Cys-83-Cys-334, and Cys-165-Cys-170. Asn-219, Asn-271, Asn-285, Asn-322, Asn-372, Asn-394, Asn-400, Asn-407, Asn-414, and Asn-478 each carry an N-linked (GlcNAc...) asparagine glycan. The chain crosses the membrane as a helical span at residues 545-565 (AVWLFMLLAYLAVSCVLFLAA). Topologically, residues 566 to 622 (RLSPYEWYNPHPCLRARPHILENQYTLGNSLWFPVGGFMQQGSEIMPRALSTRCVSG) are cytoplasmic. A helical membrane pass occupies residues 623–643 (VWWAFTLIIISSYTANLAAFL). The Extracellular portion of the chain corresponds to 644-803 (TVQRMEVPVE…HRAKGLGMEN (160 aa)). Asn-735 carries N-linked (GlcNAc...) asparagine glycosylation. Residues 804–824 (IGGIFVVLICGLIIAVFVAVM) form a helical membrane-spanning segment. At 825–979 (EFIWSTRRSA…TGPRELTEHE (155 aa)) the chain is on the cytoplasmic side. The segment covering 856–867 (RKTSRSRRRRRP) has biased composition (basic residues). Disordered stretches follow at residues 856-875 (RKTSRSRRRRRPGGPSRALL), 890-925 (LYSAGAGGDAGAHGGPQRLLDDPGPPGGPRPQAPTP), and 942-979 (RASGAGAPPRGLGTPAEATSPPRPRPGPTGPRELTEHE). Gly residues predominate over residues 894 to 903 (GAGGDAGAHG). A compositionally biased stretch (pro residues) spans 912-923 (PGPPGGPRPQAP).

Belongs to the glutamate-gated ion channel (TC 1.A.10.1) family. GRIK5 subfamily. In terms of assembly, homotetramer. Heterotetramer with GRIK2. Can form functional heteromeric receptors with GRIK1, GRIK2 and GRIK3. Forms a heteromeric complex with GRIK2. In terms of tissue distribution, expressed in the hippocampal mossy fiber synapses (at protein level).

It is found in the cell membrane. Its subcellular location is the postsynaptic cell membrane. The protein resides in the presynaptic cell membrane. Ionotropic glutamate receptor that functions as a cation-permeable ligand-gated ion channel, gated by L-glutamate and the glutamatergic agonist kainic acid. Cannot form functional channels on its own and produces channel activity only in heteromeric assembly with GRIK2 subunit. Can form functional heteromeric receptors with GRIK1 and GRIK3. This chain is Glutamate receptor ionotropic, kainate 5 (Grik5), found in Mus musculus (Mouse).